A 204-amino-acid polypeptide reads, in one-letter code: Glycerol-3-phosphate acyltransferase (204 aa).

A run of 5 helical transmembrane segments spans residues 8 to 28 (ILIF…CYIF), 53 to 73 (VPAA…VVIA), 81 to 101 (FITA…IFFG), 116 to 136 (FGFS…VAII), and 155 to 175 (VIFT…IIIL).

This sequence belongs to the PlsY family. Probably interacts with PlsX.

Its subcellular location is the cell inner membrane. It catalyses the reaction an acyl phosphate + sn-glycerol 3-phosphate = a 1-acyl-sn-glycero-3-phosphate + phosphate. It functions in the pathway lipid metabolism; phospholipid metabolism. Catalyzes the transfer of an acyl group from acyl-phosphate (acyl-PO(4)) to glycerol-3-phosphate (G3P) to form lysophosphatidic acid (LPA). This enzyme utilizes acyl-phosphate as fatty acyl donor, but not acyl-CoA or acyl-ACP. The chain is Glycerol-3-phosphate acyltransferase from Francisella tularensis subsp. tularensis (strain FSC 198).